The primary structure comprises 974 residues: Localization factor PodJL (974 aa).

Coiled-coil stretches lie at residues Asp81–Gly163, Val218–Ala320, and Gln375–Ala469. Disordered regions lie at residues Ser460–Glu497 and Ala589–Lys611. Residues Ala589–Glu598 are compositionally biased toward low complexity. The helical transmembrane segment at Ala642–Leu662 threads the bilayer. 3 Sel1-like repeats span residues Pro757–Asp793, Pro794–Leu829, and Val830–Asp865.

Post-translationally, two isoforms exist, the full-length translation product PodJL and a C-terminal truncated form PodJS. Both appear during a specific time period of the cell cycle to control different aspects of polar organelle development.

It is found in the membrane. In terms of biological role, podJL provides the positional information for the localization of several polar organelles (pili, adhesive holdfast and chemotactic apparatus) by recruiting structural (CpaE) and regulatory (PleC) proteins to a specific cell pole. This chain is Localization factor PodJL (podJ), found in Caulobacter vibrioides (strain ATCC 19089 / CIP 103742 / CB 15) (Caulobacter crescentus).